The chain runs to 242 residues: UPF0246 protein SPD_1378 (242 aa).

This sequence belongs to the UPF0246 family.

The sequence is that of UPF0246 protein SPD_1378 from Streptococcus pneumoniae serotype 2 (strain D39 / NCTC 7466).